Consider the following 122-residue polypeptide: Large ribosomal subunit protein uL14 (122 aa).

Belongs to the universal ribosomal protein uL14 family. Part of the 50S ribosomal subunit. Forms a cluster with proteins L3 and L19. In the 70S ribosome, L14 and L19 interact and together make contacts with the 16S rRNA in bridges B5 and B8.

In terms of biological role, binds to 23S rRNA. Forms part of two intersubunit bridges in the 70S ribosome. The chain is Large ribosomal subunit protein uL14 from Bacillus pumilus (strain SAFR-032).